We begin with the raw amino-acid sequence, 98 residues long: Large ribosomal subunit protein bL25 (98 aa).

The tract at residues 1–22 (MANFVLNATARNEDKQGKGASR) is disordered.

The protein belongs to the bacterial ribosomal protein bL25 family. In terms of assembly, part of the 50S ribosomal subunit; part of the 5S rRNA/L5/L18/L25 subcomplex. Contacts the 5S rRNA. Binds to the 5S rRNA independently of L5 and L18.

Functionally, this is one of the proteins that binds to the 5S RNA in the ribosome where it forms part of the central protuberance. This chain is Large ribosomal subunit protein bL25, found in Acinetobacter baylyi (strain ATCC 33305 / BD413 / ADP1).